A 65-amino-acid chain; its full sequence is Large ribosomal subunit protein uL30 (65 aa).

The protein belongs to the universal ribosomal protein uL30 family. As to quaternary structure, part of the 50S ribosomal subunit.

The chain is Large ribosomal subunit protein uL30 from Methylobacillus flagellatus (strain ATCC 51484 / DSM 6875 / VKM B-1610 / KT).